A 90-amino-acid polypeptide reads, in one-letter code: Small ribosomal subunit protein bS16 (90 aa).

The protein belongs to the bacterial ribosomal protein bS16 family.

The protein is Small ribosomal subunit protein bS16 of Bacillus velezensis (strain DSM 23117 / BGSC 10A6 / LMG 26770 / FZB42) (Bacillus amyloliquefaciens subsp. plantarum).